Consider the following 113-residue polypeptide: Holo-[acyl-carrier-protein] synthase (113 aa).

Aspartate 8 and glutamate 57 together coordinate Mg(2+).

This sequence belongs to the P-Pant transferase superfamily. AcpS family. The cofactor is Mg(2+).

The protein localises to the cytoplasm. The catalysed reaction is apo-[ACP] + CoA = holo-[ACP] + adenosine 3',5'-bisphosphate + H(+). Functionally, transfers the 4'-phosphopantetheine moiety from coenzyme A to a Ser of acyl-carrier-protein. The polypeptide is Holo-[acyl-carrier-protein] synthase (Thermodesulfovibrio yellowstonii (strain ATCC 51303 / DSM 11347 / YP87)).